A 475-amino-acid polypeptide reads, in one-letter code: Ankyrin repeat, SAM and basic leucine zipper domain-containing protein 1 (475 aa).

A disordered region spans residues 1 to 24 (MAAGTVRGLAVAGGGESSESEDDG). Residues Ser-17, Ser-18, and Ser-20 each carry the phosphoserine modification. ANK repeat units lie at residues 45–74 (EKNE…SVDS), 78–107 (YGWT…NASF), 110–144 (DKQT…DPNV), 148–177 (RLMT…EVNA), 181–210 (NGYT…NKML), and 214–243 (DGKT…PLEG). Residues 272–334 (SYTAFGDLEI…KILAALKELE (63 aa)) enclose the SAM domain.

As to quaternary structure, interacts with DDX4, PIWIL1, RANBP9 and TDRD1.

The protein resides in the cytoplasm. Plays a central role during spermatogenesis by repressing transposable elements and preventing their mobilization, which is essential for the germline integrity. Acts via the piRNA metabolic process, which mediates the repression of transposable elements during meiosis by forming complexes composed of piRNAs and Piwi proteins and governs the methylation and subsequent repression of transposons. Its association with pi-bodies suggests a participation in the primary piRNAs metabolic process. Required prior to the pachytene stage to facilitate the production of multiple types of piRNAs, including those associated with repeats involved in the regulation of retrotransposons. May act by mediating protein-protein interactions during germ cell maturation. This chain is Ankyrin repeat, SAM and basic leucine zipper domain-containing protein 1 (ASZ1), found in Neofelis nebulosa (Clouded leopard).